Here is a 578-residue protein sequence, read N- to C-terminus: DNA polymerase III subunit gamma/tau (578 aa).

42 to 49 serves as a coordination point for ATP; it reads GPRGCGKT. Cys61, Cys70, Cys73, and Cys76 together coordinate Zn(2+). Disordered regions lie at residues 389-423 and 525-559; these read APQAVPRPSAAAAEPKHQPAREPRPVLAPTPASSE and AVNPAPTANSTQRDEEEHMLAEAGRGDPSPRRDPE. 2 stretches are compositionally biased toward basic and acidic residues: residues 402 to 412 and 536 to 559; these read EPKHQPAREPR and QRDEEEHMLAEAGRGDPSPRRDPE.

It belongs to the DnaX/STICHEL family. In terms of assembly, DNA polymerase III contains a core (composed of alpha, epsilon and theta chains) that associates with a tau subunit. This core dimerizes to form the POLIII' complex. PolIII' associates with the gamma complex (composed of gamma, delta, delta', psi and chi chains) and with the beta chain to form the complete DNA polymerase III complex.

It catalyses the reaction DNA(n) + a 2'-deoxyribonucleoside 5'-triphosphate = DNA(n+1) + diphosphate. Functionally, DNA polymerase III is a complex, multichain enzyme responsible for most of the replicative synthesis in bacteria. This DNA polymerase also exhibits 3' to 5' exonuclease activity. This is DNA polymerase III subunit gamma/tau (dnaX) from Mycobacterium bovis (strain ATCC BAA-935 / AF2122/97).